The sequence spans 451 residues: Tubulin alpha-1B chain (451 aa).

The MREC motif motif lies at 1 to 4 (MREC). Residues glycine 10, glutamine 11, alanine 12, and glutamine 15 each coordinate GTP. Lysine 40 bears the N6,N6,N6-trimethyllysine; alternate mark. Lysine 40 is subject to N6-acetyllysine; alternate. Serine 48 carries the post-translational modification Phosphoserine. Glutamate 71, alanine 99, serine 140, glycine 143, glycine 144, threonine 145, glycine 146, threonine 179, glutamate 183, asparagine 206, tyrosine 224, and asparagine 228 together coordinate GTP. Position 71 (glutamate 71) interacts with Mg(2+). Residue serine 232 is modified to Phosphoserine. Residue leucine 252 participates in GTP binding. Glutamate 254 is an active-site residue. Tyrosine 282 is subject to 3'-nitrotyrosine. Lysine 326 is covalently cross-linked (Glycyl lysine isopeptide (Lys-Gly) (interchain with G-Cter in ubiquitin)). Arginine 339 is subject to Omega-N-methylarginine. A Glycyl lysine isopeptide (Lys-Gly) (interchain with G-Cter in ubiquitin) cross-link involves residue lysine 370. The tract at residues 432 to 451 (YEEVGVDSVEGEGEEEGEEY) is disordered. A Phosphoserine modification is found at serine 439. A 5-glutamyl polyglutamate mark is found at glutamate 443 and glutamate 445. At tyrosine 451 the chain carries 3'-nitrotyrosine.

This sequence belongs to the tubulin family. In terms of assembly, heterodimer of alpha- and beta-tubulin. A typical microtubule is a hollow water-filled tube with an outer diameter of 25 nm and an inner diameter of 15 nM. Alpha-beta heterodimers associate head-to-tail to form protofilaments running lengthwise along the microtubule wall with the beta-tubulin subunit facing the microtubule plus end conferring a structural polarity. Microtubules usually have 13 protofilaments but different protofilament numbers can be found in some organisms and specialized cells. Interacts with gamma-tubulin; the interaction allows microtubules to nucleate from the gamma-tubulin ring complex (gTuRC). Nascent microtubule interacts (via alpha-tubulin MREC motif) with TTC5/STRAP; this interaction may result in tubulin mRNA-targeted degradation. Component of sperm flagellar doublet microtubules. Requires Mg(2+) as cofactor. Post-translationally, some glutamate residues at the C-terminus are polyglutamylated, resulting in polyglutamate chains on the gamma-carboxyl group. Polyglutamylation plays a key role in microtubule severing by spastin (SPAST). SPAST preferentially recognizes and acts on microtubules decorated with short polyglutamate tails: severing activity by SPAST increases as the number of glutamates per tubulin rises from one to eight, but decreases beyond this glutamylation threshold. Glutamylation is also involved in cilia motility. In terms of processing, some glutamate residues at the C-terminus are monoglycylated but not polyglycylated due to the absence of functional TTLL10 in human. Monoglycylation is mainly limited to tubulin incorporated into cilia and flagella axonemes, which is required for their stability and maintenance. Flagella glycylation controls sperm motility. Both polyglutamylation and monoglycylation can coexist on the same protein on adjacent residues, and lowering glycylation levels increases polyglutamylation, and reciprocally. Acetylation of alpha chains at Lys-40 is located inside the microtubule lumen. This modification has been correlated with increased microtubule stability, intracellular transport and ciliary assembly. Post-translationally, methylation of alpha chains at Lys-40 is found in mitotic microtubules and is required for normal mitosis and cytokinesis contributing to genomic stability. In terms of processing, nitration of Tyr-451 is irreversible and interferes with normal dynein intracellular distribution. Undergoes a tyrosination/detyrosination cycle, the cyclic removal and re-addition of a C-terminal tyrosine residue by the enzymes tubulin tyrosine carboxypeptidase (MATCAP1/KIAA0895L, VASH1 or VASH2) and tubulin tyrosine ligase (TTL), respectively. Post-translationally, tyrosination promotes microtubule interaction with CAP-Gly domain-containing proteins such as CLIP1, CLIP2 and DCTN1. Tyrosination regulates the initiation of dynein-dynactin motility via interaction with DCTN1, which brings the dynein-dynactin complex into contact with microtubules. In neurons, tyrosinated tubulins mediate the initiation of retrograde vesicle transport. In terms of processing, detyrosination is involved in metaphase plate congression by guiding chromosomes during mitosis: detyrosination promotes interaction with CENPE, promoting pole-proximal transport of chromosomes toward the equator. Detyrosination increases microtubules-dependent mechanotransduction in dystrophic cardiac and skeletal muscle. In cardiomyocytes, detyrosinated microtubules are required to resist to contractile compression during contraction: detyrosination promotes association with desmin (DES) at force-generating sarcomeres, leading to buckled microtubules and mechanical resistance to contraction.

It localises to the cytoplasm. It is found in the cytoskeleton. The enzyme catalyses GTP + H2O = GDP + phosphate + H(+). Functionally, tubulin is the major constituent of microtubules, protein filaments consisting of alpha- and beta-tubulin heterodimers. Microtubules grow by the addition of GTP-tubulin dimers to the microtubule end, where a stabilizing cap forms. Below the cap, tubulin dimers are in GDP-bound state, owing to GTPase activity of alpha-tubulin. The protein is Tubulin alpha-1B chain (TUBA1B) of Homo sapiens (Human).